The chain runs to 290 residues: Glycine-N-acyltransferase-like protein 3 (290 aa).

It carries out the reaction an acyl-CoA + glycine = an N-acylglycine + CoA + H(+). The enzyme catalyses (9Z)-octadecenoyl-CoA + glycine = N-(9Z-octadecenoyl)glycine + CoA + H(+). The catalysed reaction is hexadecanoyl-CoA + glycine = N-hexadecanoylglycine + CoA + H(+). It participates in lipid metabolism. Catalyzes the conjugation of long-chain fatty acyl-CoA thioester and glycine to produce long-chain N-(fatty acyl)glycine, an intermediate in the primary fatty acid amide biosynthetic pathway. The polypeptide is Glycine-N-acyltransferase-like protein 3 (Mus musculus (Mouse)).